Here is a 381-residue protein sequence, read N- to C-terminus: Prostatic acid phosphatase (381 aa).

The N-terminal stretch at 1 to 31 (MRAVPLHLVGTASLTLGFLLLLSLRLDPGQA) is a signal peptide. Arginine 42 is a binding site for substrate. Catalysis depends on histidine 43, which acts as the Nucleophile. Arginine 46 serves as a coordination point for substrate. N-linked (GlcNAc...) asparagine glycosylation occurs at asparagine 93. Residue arginine 110 participates in substrate binding. Intrachain disulfides connect cysteine 160/cysteine 371, cysteine 214/cysteine 312, and cysteine 346/cysteine 350. A glycan (N-linked (GlcNAc...) asparagine) is linked at asparagine 219. Histidine 288 contributes to the substrate binding site. The Proton donor role is filled by aspartate 289. N-linked (GlcNAc...) asparagine glycosylation is present at asparagine 332.

Belongs to the histidine acid phosphatase family. Homodimer; dimer formation is required for phosphatase activity. Post-translationally, N-glycosylated. In terms of tissue distribution, expressed in prostate epithelium. Also expressed in the pelvic nerve and sacral spinal cord. Localizes in peptidergic and non-peptidergic nociceptive (pain-sensing) neurons.

The protein resides in the secreted. The protein localises to the cell membrane. It localises to the lysosome membrane. The enzyme catalyses a phosphate monoester + H2O = an alcohol + phosphate. The catalysed reaction is a ribonucleoside 5'-phosphate + H2O = a ribonucleoside + phosphate. It catalyses the reaction 1-(9Z-octadecenoyl)-sn-glycero-3-phosphate + H2O = 1-(9Z-octadecenoyl)-sn-glycerol + phosphate. It carries out the reaction O-phospho-L-tyrosyl-[protein] + H2O = L-tyrosyl-[protein] + phosphate. With respect to regulation, inhibited by L(+)-tartrate. Its function is as follows. A non-specific tyrosine phosphatase that dephosphorylates a diverse number of substrates under acidic conditions (pH 4-6) including alkyl, aryl, and acyl orthophosphate monoesters and phosphorylated proteins. Has lipid phosphatase activity and inactivates lysophosphatidic acid in seminal plasma. In addition to its tyrosine phosphatase activity, also has ecto-5'-nucleotidase activity in dorsal root ganglion (DRG) neurons. Generates adenosine from AMP. This extracellular adenosine leads to a decrease in chronic pain by activating A1R in nociceptive neurons. This is Prostatic acid phosphatase (Acp3) from Rattus norvegicus (Rat).